Reading from the N-terminus, the 420-residue chain is MKFQKLKGTRDYYFQDSNKLEIIRNAFFTSAKKFNFSFLETPIIENVELFKRTSGDFSDLVKKELYSFEDKSKRQIALRPEGTAPALRAIVENNLLQKHNKFFYFGPMFRYENPQKGRQRQFFSGGIEWLEKQSPFTNIEIIFFAKNFLDTLKIDDYEIVINWIGHPEQRKNYLDHLKNYLNQFENQLEEISKERLKNNALRILDDKIESQKAFVKNAPKIHDFLPKESLENFYQLQDLFKKFDIKFKVDPFLVRGLDYYSDFVFEFVSTNQNLGAQKTLLGGGVYSSLLKELGGENIEGIGFGFGLERIMEVIDLNNFKDDAKKITAFASNEDDLIALLKLRNNFGDLIKIDCINKVVNFKKIFKSKQIKESDFLIFKELNNAQNEVSLKNKFNDQKLVVDLINPNIENIKKYIKENSD.

The protein belongs to the class-II aminoacyl-tRNA synthetase family. As to quaternary structure, homodimer.

The protein localises to the cytoplasm. The enzyme catalyses tRNA(His) + L-histidine + ATP = L-histidyl-tRNA(His) + AMP + diphosphate + H(+). The chain is Histidine--tRNA ligase (hisS) from Mycoplasmopsis pulmonis (strain UAB CTIP) (Mycoplasma pulmonis).